Here is a 695-residue protein sequence, read N- to C-terminus: ATP-dependent permease MDL1, mitochondrial (695 aa).

Residues 1–100 (MIVRMIRLCK…RLFVLSKPES (100 aa)) constitute a mitochondrion transit peptide. Transmembrane regions (helical) follow at residues 103-123 (IGLA…VPSV), 156-176 (FTAL…RIII), 242-262 (FVGF…MMIL), 337-357 (GLFF…LLLV), and 372-392 (LSSF…LSSF). The 296-residue stretch at 103–398 (IGLALLLILI…LSSFYSELMK (296 aa)) folds into the ABC transmembrane type-1 domain. One can recognise an ABC transporter domain in the interval 432–673 (IVFKNVSFTY…PNSELNALLA (242 aa)). ATP is bound at residue 467 to 474 (GPSGSGKS).

This sequence belongs to the ABC transporter superfamily. ABCB family. Mitochondrial peptide exporter (TC 3.A.1.212) subfamily.

Its subcellular location is the mitochondrion inner membrane. Functionally, mediates export of peptides with molecular masses of 2100 to 600 daltons generated upon proteolysis of mitochondrial inner membrane proteins. This is ATP-dependent permease MDL1, mitochondrial (MDL1) from Saccharomyces cerevisiae (strain ATCC 204508 / S288c) (Baker's yeast).